Here is a 137-residue protein sequence, read N- to C-terminus: Methylglyoxal synthase (137 aa).

An MGS-like domain is found at 1–137; the sequence is MNIALVAHDK…KLSHNDEPPA (137 aa). Substrate contacts are provided by residues H8, K12, 34–37, and 54–55; these read TGTT and SG. The active-site Proton donor/acceptor is D60. A substrate-binding site is contributed by H87.

This sequence belongs to the methylglyoxal synthase family.

It catalyses the reaction dihydroxyacetone phosphate = methylglyoxal + phosphate. Catalyzes the formation of methylglyoxal from dihydroxyacetone phosphate. The sequence is that of Methylglyoxal synthase from Exiguobacterium sp. (strain ATCC BAA-1283 / AT1b).